Reading from the N-terminus, the 251-residue chain is Fibroblast growth factor 23 (251 aa).

Residues 1-24 form the signal peptide; that stretch reads MLGACLRLLVGALCTVCSLGTARA. Cys-95 and Cys-113 are oxidised to a cystine. O-linked (GalNAc) threonine glycosylation is found at Thr-171 and Thr-178. Positions 175-251 are disordered; that stretch reads RRHTRSAEDP…DRCRPFPRFV (77 aa). Positions 179-189 are enriched in basic and acidic residues; it reads RSAEDPPERDP. Ser-180 carries the post-translational modification Phosphoserine; by FAM20C.

This sequence belongs to the heparin-binding growth factors family. In terms of assembly, interacts with FGFR1, FGFR2, FGFR3 and FGFR4. Affinity between fibroblast growth factors (FGFs) and their receptors is increased by KL and heparan sulfate glycosaminoglycans that function as coreceptors. Following secretion this protein is inactivated by cleavage into a N-terminal fragment and a C-terminal fragment. The processing is effected by proprotein convertases. Post-translationally, O-glycosylated at Thr-171 and Thr-178 by GALNT3 and glycosylation of Thr-178 requires previous glycosylation at Thr171. Glycosylation is necessary for secretion; it blocks processing by proprotein convertases when the O-glycan is alpha 2,6-sialylated. Competition between proprotein convertase cleavage and block of cleavage by O-glycosylation determines the level of secreted active FGF23. In terms of processing, phosphorylation at Ser-180 mediated by FAM20C slows down glycosylation at Thr-178 notably. In terms of tissue distribution, expressed in the parathyroid.

Its subcellular location is the secreted. Its function is as follows. Regulator of phosphate homeostasis. Inhibits renal tubular phosphate transport by reducing SLC34A1 levels. Regulator of vitamin-D metabolism. Negatively regulates osteoblasts differentiation and matrix mineralization. Acts directly on the parathyroid to decrease PTH secretion. Up-regulates EGR1 expression in the presence of KL. The protein is Fibroblast growth factor 23 (Fgf23) of Rattus norvegicus (Rat).